A 791-amino-acid polypeptide reads, in one-letter code: Outer membrane protein assembly factor BamA (791 aa).

POTRA domains are found at residues 59–130 (NAIA…VTEK), 131–209 (PRID…VEEG), 212–298 (LYIK…VKEG), 301–383 (YKLG…IRKR), and 386–459 (VYIN…VKEQ).

This sequence belongs to the BamA family. In terms of assembly, part of the Bam complex.

It localises to the cell outer membrane. In terms of biological role, part of the outer membrane protein assembly complex, which is involved in assembly and insertion of beta-barrel proteins into the outer membrane. This Nitratidesulfovibrio vulgaris (strain ATCC 29579 / DSM 644 / CCUG 34227 / NCIMB 8303 / VKM B-1760 / Hildenborough) (Desulfovibrio vulgaris) protein is Outer membrane protein assembly factor BamA.